Consider the following 205-residue polypeptide: Imidazoleglycerol-phosphate dehydratase (205 aa).

Residues 1–27 (MKQASPRAGGAKARRGQVARKTKETDV) are disordered.

The protein belongs to the imidazoleglycerol-phosphate dehydratase family.

It is found in the cytoplasm. The catalysed reaction is D-erythro-1-(imidazol-4-yl)glycerol 3-phosphate = 3-(imidazol-4-yl)-2-oxopropyl phosphate + H2O. The protein operates within amino-acid biosynthesis; L-histidine biosynthesis; L-histidine from 5-phospho-alpha-D-ribose 1-diphosphate: step 6/9. In Anaeromyxobacter sp. (strain Fw109-5), this protein is Imidazoleglycerol-phosphate dehydratase.